We begin with the raw amino-acid sequence, 528 residues long: GMP synthase [glutamine-hydrolyzing] (528 aa).

The region spanning 13–204 is the Glutamine amidotransferase type-1 domain; sequence SILILDFGSQ…VYGISSCVAD (192 aa). C90 serves as the catalytic Nucleophile. Active-site residues include H178 and E180. Positions 205–403 constitute a GMPS ATP-PPase domain; the sequence is WTTETYIEET…LGLPDEIIKR (199 aa). 232-238 lines the ATP pocket; it reads SGGVDSS.

As to quaternary structure, homodimer.

It catalyses the reaction XMP + L-glutamine + ATP + H2O = GMP + L-glutamate + AMP + diphosphate + 2 H(+). It functions in the pathway purine metabolism; GMP biosynthesis; GMP from XMP (L-Gln route): step 1/1. Its function is as follows. Catalyzes the synthesis of GMP from XMP. In Prochlorococcus marinus (strain MIT 9312), this protein is GMP synthase [glutamine-hydrolyzing].